The following is a 231-amino-acid chain: MQFDIITLFPDFFTSPLQSGLLAKALERDIARVNLVNLRDFAHDKHRRVDDEPYGGGVGMLLKPEPIFEAIESLEILPPREIVLMTPQGEPLHQALLKTWAGSYQQLILICGHYEGVDERVCEHLVTREVSLGDFVLTCGEIPALAIINGVTRLLPGTVGKAESLKLESFEAGLLDYPQYTRPPVFRGWQVPPVLRSGNHQDIADWRYQQQLDRTKERRPDIWQKWLEEQD.

S-adenosyl-L-methionine contacts are provided by residues glycine 112 and 132 to 137; that span reads LGDFVL.

The protein belongs to the RNA methyltransferase TrmD family. Homodimer.

The protein localises to the cytoplasm. It catalyses the reaction guanosine(37) in tRNA + S-adenosyl-L-methionine = N(1)-methylguanosine(37) in tRNA + S-adenosyl-L-homocysteine + H(+). In terms of biological role, specifically methylates guanosine-37 in various tRNAs. This is tRNA (guanine-N(1)-)-methyltransferase from Microcystis aeruginosa (strain NIES-843 / IAM M-2473).